The primary structure comprises 1523 residues: TALPID3 protein (1523 aa).

Residues 1-16 (MEAESGSSTSQDSLAS) show a composition bias toward polar residues. Disordered regions lie at residues 1 to 20 (MEAESGSSTSQDSLASLTAG) and 57 to 84 (SRQAAGVALSRGETPCEPPVPSSGASNG). Coiled-coil stretches lie at residues 428-466 (IEKTVKKADDLLQVLGQLRKEMHDMLQEASSWKSDMNDL) and 499-528 (ILSDAKRVLREVQSRKKVLEENLEAVLRAK). A required for centrosomal localization region spans residues 498–585 (SILSDAKRVL…MEQVKYDQKV (88 aa)). 5 disordered regions span residues 1070 to 1112 (EPLV…LSGD), 1137 to 1262 (VITP…SEGE), 1294 to 1313 (ANEMDYDPPSEGQVVRRSHK), 1373 to 1410 (DIDHATARASEDRPYQGSRSPSPGQLTHPAEILGDADT), and 1498 to 1523 (SMNIDDQTQSLSSIHGDSDSSGADTF). A compositionally biased stretch (pro residues) spans 1073–1088 (VPTPLPTPQATPPQTP). The segment covering 1099–1108 (TPESSPSITE) has biased composition (polar residues). 2 stretches are compositionally biased toward low complexity: residues 1137 to 1149 (VITPISTPPEIIT) and 1236 to 1251 (SSEQSTQESSLTPTET). Basic and acidic residues predominate over residues 1373–1386 (DIDHATARASEDRP). Over residues 1507–1523 (SLSSIHGDSDSSGADTF) the composition is skewed to low complexity.

This sequence belongs to the TALPID3 family. As to expression, ubiquitously expressed.

The protein resides in the cytoplasm. It localises to the cytoskeleton. It is found in the microtubule organizing center. The protein localises to the centrosome. Functionally, required for ciliogenesis and sonic hedgehog/SHH signaling. Independently, involved in regulation of cell intracellular organization. Involved in regulation of cell polarity. This chain is TALPID3 protein (TALPID3), found in Gallus gallus (Chicken).